The primary structure comprises 414 residues: Glucose-1-phosphate adenylyltransferase (414 aa).

Alpha-D-glucose 1-phosphate-binding positions include glycine 164, 184-185 (EK), and serine 204.

It belongs to the bacterial/plant glucose-1-phosphate adenylyltransferase family. As to quaternary structure, homotetramer.

It catalyses the reaction alpha-D-glucose 1-phosphate + ATP + H(+) = ADP-alpha-D-glucose + diphosphate. It functions in the pathway glycan biosynthesis; glycogen biosynthesis. Its function is as follows. Involved in the biosynthesis of ADP-glucose, a building block required for the elongation reactions to produce glycogen. Catalyzes the reaction between ATP and alpha-D-glucose 1-phosphate (G1P) to produce pyrophosphate and ADP-Glc. The protein is Glucose-1-phosphate adenylyltransferase of Acidothermus cellulolyticus (strain ATCC 43068 / DSM 8971 / 11B).